Here is a 90-residue protein sequence, read N- to C-terminus: Small ribosomal subunit protein bS16 (90 aa).

The protein belongs to the bacterial ribosomal protein bS16 family.

The chain is Small ribosomal subunit protein bS16 from Streptococcus pyogenes serotype M4 (strain MGAS10750).